A 308-amino-acid chain; its full sequence is Olfactory receptor 2T7 (308 aa).

The Extracellular segment spans residues 1–17 (MPTLSFWVCSATPVSPG). Residues 18 to 40 (FFALILLVFVTSIASNVVKIILI) form a helical membrane-spanning segment. The Cytoplasmic segment spans residues 41-51 (HIDSRLHTPMY). Residues 52–74 (FLLSQLSLRDILYISTIVPKMLV) form a helical membrane-spanning segment. The Extracellular portion of the chain corresponds to 75 to 88 (DQVMSQRAISFAGC). An intrachain disulfide couples Cys-88 to Cys-170. The helical transmembrane segment at 89 to 109 (TAQHFLYLTLAGAEFFLLGLM) threads the bilayer. Residues 110-130 (SCDRYVAICNPLHYPDLMSRK) are Cytoplasmic-facing. Residues 131 to 151 (ICWLIVAAAWLGGSIDGFLLT) traverse the membrane as a helical segment. Topologically, residues 152–188 (PVTMQFPFCASREINHFFCEVPALLKLSCTDTSAYET) are extracellular. A helical membrane pass occupies residues 189–209 (AMYVCCIMMLLIPFSVISGSY). At 210-235 (TRILITVYRMSEAEGRRKAVATCSSH) the chain is on the cytoplasmic side. The chain crosses the membrane as a helical span at residues 236–256 (MVVVSLFYGAAMYTYVLPHSY). Residues 257 to 262 (HTPEQD) are Extracellular-facing. Residues 263-283 (KAVSAFYTILTPMLNPLIYSL) traverse the membrane as a helical segment. Topologically, residues 284–308 (RNKDVTGALQKVVGRCVSSGKVTTF) are cytoplasmic.

This sequence belongs to the G-protein coupled receptor 1 family.

The protein resides in the cell membrane. Functionally, odorant receptor. This is Olfactory receptor 2T7 (OR2T7) from Homo sapiens (Human).